A 119-amino-acid chain; its full sequence is Protein TusC (119 aa).

It belongs to the DsrF/TusC family. Heterohexamer, formed by a dimer of trimers. The hexameric TusBCD complex contains 2 copies each of TusB, TusC and TusD. The TusBCD complex interacts with TusE.

It localises to the cytoplasm. Part of a sulfur-relay system required for 2-thiolation of 5-methylaminomethyl-2-thiouridine (mnm(5)s(2)U) at tRNA wobble positions. The chain is Protein TusC from Cronobacter sakazakii (strain ATCC BAA-894) (Enterobacter sakazakii).